We begin with the raw amino-acid sequence, 184 residues long: GTP cyclohydrolase 1 (184 aa).

The Zn(2+) site is built by C75, H78, and C146.

The protein belongs to the GTP cyclohydrolase I family. Toroid-shaped homodecamer, composed of two pentamers of five dimers.

The catalysed reaction is GTP + H2O = 7,8-dihydroneopterin 3'-triphosphate + formate + H(+). The protein operates within cofactor biosynthesis; 7,8-dihydroneopterin triphosphate biosynthesis; 7,8-dihydroneopterin triphosphate from GTP: step 1/1. In Chromohalobacter salexigens (strain ATCC BAA-138 / DSM 3043 / CIP 106854 / NCIMB 13768 / 1H11), this protein is GTP cyclohydrolase 1.